The following is a 921-amino-acid chain: MASFPRFRFLAIAVVFHLVKASVDPTTRRSSSALRRPGHVALIAGLYEDVSAVTTGWKLNPVNFDSVFNRSRHTWSWGSPDILPMFEQGAVPGRVDAYTYGAELEDFSLDGFALDLWVFDHVKELFAEARTNKTLNDALRQDRIVFFLHLLGLDTTGHSFRPYSKEYLNNIKVVDKGVQEITELMKDFYADDRTAFVFTADHGMSDWGNHGDGHPDNTRTPLIAWGSGVAKPQLYPGEVAPGHDEYSSDWNLDHIRRHDVEQADVAALMAYLAGTEFPANSVGELPLSFLTAGLKEKAEASLVNAQGILEQYRVKEEGKKLTELRYRPYEPLSDEGMATESRVAHIRQLIETGSYEEAIEESAALLKVGLGGLRYLQTYDWLFLRALITIGYLGWVAYALTTVIDLHVLHGRIQPSRTLIGTIISTSALTALYASFAISKSPLTYYAYAFFPVFFWEEVYARRESLTEGRKELFGHIKSSSNFVSLVFNCAVYVGIIESLALGYIHREILTILFVIGAFWPIAYGFSFLRQHMALSITWFLSCIAMSTFTLLPPAMTTEDVNMIMLGGALMVLVGIIYLILEDFVLSDFGWSEKPSSPRNHVSRTLVGIQIGLTLLAALVTRSSALSMQANQGLPRGNQVMGWVVLVVSLLMPLAYRAKPNNHYMHRILVIFLTCAPTFVILTISYEGLFYIAFSAVLVSWVRLEHAIYKFPSSSANGAARSAPSPAKPHNLETSQTLPSPFRPLTLRDARVALFFFVLFQAAFFSTGNVASVSSFSLDSVSRLIPIFDPFSQGAMLILKLLIPFALISANLGILNKRLGVAPSALFMVVMAISDILTLYFFWVVKDEGSWLEIGSTISHFVIASLLCVFVAALEGVSAMFIAGVEVSEDVDRAVGKGAVAEVLLEKTEAERDGGAGSGGK.

The chain crosses the membrane as a helical span at residues 37–57 (PGHVALIAGLYEDVSAVTTGW). Residues Asn69 and Asn132 are each glycosylated (N-linked (GlcNAc...) asparagine). Transmembrane regions (helical) follow at residues 386 to 406 (ALIT…VIDL), 418 to 438 (TLIG…SFAI), 441 to 461 (SPLT…EVYA), 483 to 503 (FVSL…LALG), 509 to 529 (ILTI…FSFL), 533 to 553 (MALS…TLLP), 561 to 581 (VNMI…YLIL), 606 to 626 (LVGI…SSAL), 640 to 660 (VMGW…RAKP), and 679 to 699 (FVIL…AVLV). The segment at 715–737 (SANGAARSAPSPAKPHNLETSQT) is disordered. Helical transmembrane passes span 752–772 (VALF…NVAS), 795–815 (AMLI…LGIL), 825–845 (ALFM…FWVV), and 862–882 (VIAS…AMFI).

It belongs to the PIGG/PIGN/PIGO family. PIGN subfamily.

It localises to the endoplasmic reticulum membrane. Its pathway is glycolipid biosynthesis; glycosylphosphatidylinositol-anchor biosynthesis. Ethanolamine phosphate transferase involved in glycosylphosphatidylinositol-anchor biosynthesis. Transfers ethanolamine phosphate to the first alpha-1,4-linked mannose of the glycosylphosphatidylinositol precursor of GPI-anchor. The sequence is that of GPI ethanolamine phosphate transferase 1 (MCD4) from Chaetomium globosum (strain ATCC 6205 / CBS 148.51 / DSM 1962 / NBRC 6347 / NRRL 1970) (Soil fungus).